Consider the following 522-residue polypeptide: N-acetylgalactosamine-6-sulfatase (522 aa).

A signal peptide spans 1–26 (MAAVVAATRWWQLLLVLSAAGMGASG). Residues 27 to 379 (APQPPNILLL…PTLLQGRLMD (353 aa)) form a catalytic domain region. Residues Asp39, Asp40, and Cys79 each coordinate Ca(2+). Residue Cys79 is the Nucleophile of the active site. At Cys79 the chain carries 3-oxoalanine (Cys). His142 is a catalytic residue. The N-linked (GlcNAc...) asparagine glycan is linked to Asn204. Ca(2+) is bound by residues Asp288 and Asn289. Cysteines 308 and 419 form a disulfide. Asn423 is a glycosylation site (N-linked (GlcNAc...) asparagine). 2 disulfides stabilise this stretch: Cys489–Cys518 and Cys501–Cys507.

Belongs to the sulfatase family. As to quaternary structure, homodimer. Requires Ca(2+) as cofactor. In terms of processing, the conversion to 3-oxoalanine (also known as C-formylglycine, FGly), of a serine or cysteine residue in prokaryotes and of a cysteine residue in eukaryotes, is critical for catalytic activity.

Its subcellular location is the lysosome. It catalyses the reaction Hydrolysis of the 6-sulfate groups of the N-acetyl-D-galactosamine 6-sulfate units of chondroitin sulfate and of the D-galactose 6-sulfate units of keratan sulfate.. The chain is N-acetylgalactosamine-6-sulfatase (GALNS) from Homo sapiens (Human).